The following is a 333-amino-acid chain: Foldase protein PrsA (333 aa).

The signal sequence occupies residues 1 to 22 (MKKSTKLLAGIVTLASAMTLAA). Cysteine 23 carries the N-palmitoyl cysteine lipid modification. A lipid anchor (S-diacylglycerol cysteine) is attached at cysteine 23. Positions 145–240 (TPEMTTQVTT…NKFYIVKVTK (96 aa)) constitute a PpiC domain. The disordered stretch occupies residues 301-333 (DKKASKANTSKSDQKSSSDSSKDSQSSKSKSEK). A compositionally biased stretch (basic and acidic residues) spans 312 to 322 (SDQKSSSDSSK). Residues 323–333 (DSQSSKSKSEK) show a composition bias toward low complexity.

This sequence belongs to the PrsA family.

It is found in the cell membrane. It catalyses the reaction [protein]-peptidylproline (omega=180) = [protein]-peptidylproline (omega=0). Functionally, plays a major role in protein secretion by helping the post-translocational extracellular folding of several secreted proteins. This chain is Foldase protein PrsA, found in Streptococcus equi subsp. equi (strain 4047).